A 119-amino-acid chain; its full sequence is Large ribosomal subunit protein uL24 (119 aa).

Belongs to the universal ribosomal protein uL24 family. As to quaternary structure, part of the 50S ribosomal subunit.

In terms of biological role, one of two assembly initiator proteins, it binds directly to the 5'-end of the 23S rRNA, where it nucleates assembly of the 50S subunit. Its function is as follows. Located at the polypeptide exit tunnel on the outside of the subunit. The chain is Large ribosomal subunit protein uL24 from Methanosarcina acetivorans (strain ATCC 35395 / DSM 2834 / JCM 12185 / C2A).